The following is a 1108-amino-acid chain: DNA-directed RNA polymerase subunit beta (1108 aa).

Positions 1081–1108 are disordered; it reads SPRRTPARPTIDYSALDDTDDKEGATTF.

The protein belongs to the RNA polymerase beta chain family. In cyanobacteria the RNAP catalytic core is composed of 2 alpha, 1 beta, 1 beta', 1 gamma and 1 omega subunit. When a sigma factor is associated with the core the holoenzyme is formed, which can initiate transcription.

The enzyme catalyses RNA(n) + a ribonucleoside 5'-triphosphate = RNA(n+1) + diphosphate. Functionally, DNA-dependent RNA polymerase catalyzes the transcription of DNA into RNA using the four ribonucleoside triphosphates as substrates. The protein is DNA-directed RNA polymerase subunit beta of Thermosynechococcus vestitus (strain NIES-2133 / IAM M-273 / BP-1).